Reading from the N-terminus, the 448-residue chain is 5-hydroxytryptamine receptor 7 (448 aa).

Over Met-1–Val-86 the chain is Extracellular. Residues Asn-5 and Asn-69 are each glycosylated (N-linked (GlcNAc...) asparagine). Residues Ile-87–Phe-111 traverse the membrane as a helical segment. Topologically, residues Val-112 to Tyr-121 are cytoplasmic. Residues Leu-122–Val-143 traverse the membrane as a helical segment. Residues Thr-144–His-155 are Extracellular-facing. A helical transmembrane segment spans residues Phe-156–Ile-181. Cysteines 158 and 234 form a disulfide. Asp-165 is a serotonin binding site. Residues Asp-182–Cys-201 are Cytoplasmic-facing. A helical transmembrane segment spans residues Met-202–Phe-222. Residues Gly-223 to Phe-240 lie on the Extracellular side of the membrane. A helical membrane pass occupies residues Gly-241–Tyr-263. Topologically, residues Gln-264–Ala-329 are cytoplasmic. Residues Thr-330 to Phe-355 traverse the membrane as a helical segment. Residues Ile-356–Leu-366 lie on the Extracellular side of the membrane. The helical transmembrane segment at Trp-367–Phe-390 threads the bilayer. Residues Asn-391–Thr-448 lie on the Cytoplasmic side of the membrane. The S-palmitoyl cysteine moiety is linked to residue Cys-404.

Belongs to the G-protein coupled receptor 1 family. Thalamus, hypothalamus, and the hippocampal rudiments.

It localises to the cell membrane. Its function is as follows. G-protein coupled receptor for 5-hydroxytryptamine (serotonin), a biogenic hormone that functions as a neurotransmitter, a hormone and a mitogen. Ligand binding causes a conformation change that triggers signaling via guanine nucleotide-binding proteins (G proteins) and modulates the activity of downstream effectors. HTR7 is coupled to G(s) G alpha proteins and mediates activation of adenylate cyclase activity. This Rattus norvegicus (Rat) protein is 5-hydroxytryptamine receptor 7.